We begin with the raw amino-acid sequence, 565 residues long: Periplasmic trehalase (565 aa).

The signal sequence occupies residues 1-30 (MKSPAPSRPQKMALIPACIFLCFAALSVQA). Substrate-binding positions include R152, 159 to 160 (WD), N196, 205 to 207 (RSQ), 277 to 279 (RPE), and G310. Residues D312 and E496 each act as proton donor/acceptor in the active site. Residue E511 participates in substrate binding. The interval 540–565 (DNVPATHPTVKSATTQPSTKEAQPTP) is disordered. Polar residues predominate over residues 548-565 (TVKSATTQPSTKEAQPTP).

It belongs to the glycosyl hydrolase 37 family. Monomer.

It is found in the periplasm. It carries out the reaction alpha,alpha-trehalose + H2O = alpha-D-glucose + beta-D-glucose. Functionally, provides the cells with the ability to utilize trehalose at high osmolarity by splitting it into glucose molecules that can subsequently be taken up by the phosphotransferase-mediated uptake system. In Shigella flexneri, this protein is Periplasmic trehalase.